The sequence spans 378 residues: Erythronate-4-phosphate dehydrogenase (378 aa).

Positions 45 and 66 each coordinate substrate. NAD(+) contacts are provided by aspartate 146 and threonine 175. Residue arginine 208 is part of the active site. An NAD(+)-binding site is contributed by aspartate 232. Residue glutamate 237 is part of the active site. Residue histidine 254 is the Proton donor of the active site. Position 257 (glycine 257) interacts with NAD(+). Tyrosine 258 contributes to the substrate binding site.

It belongs to the D-isomer specific 2-hydroxyacid dehydrogenase family. PdxB subfamily. As to quaternary structure, homodimer.

The protein localises to the cytoplasm. The catalysed reaction is 4-phospho-D-erythronate + NAD(+) = (R)-3-hydroxy-2-oxo-4-phosphooxybutanoate + NADH + H(+). It participates in cofactor biosynthesis; pyridoxine 5'-phosphate biosynthesis; pyridoxine 5'-phosphate from D-erythrose 4-phosphate: step 2/5. In terms of biological role, catalyzes the oxidation of erythronate-4-phosphate to 3-hydroxy-2-oxo-4-phosphonooxybutanoate. The sequence is that of Erythronate-4-phosphate dehydrogenase from Escherichia coli O157:H7.